Here is a 398-residue protein sequence, read N- to C-terminus: Fructose-bisphosphate aldolase 2, chloroplastic (398 aa).

The N-terminal 46 residues, 1 to 46 (MASTSLLKASPVLDKSEWVKGQSVLFRQPSSASVVLRNRATSLTVR), are a transit peptide targeting the chloroplast. Arg-95 is a binding site for substrate. A Phosphoserine modification is found at Ser-157. A substrate-binding site is contributed by Lys-185. A Phosphoserine modification is found at Ser-215. Glu-225 (proton acceptor) is an active-site residue. The Schiff-base intermediate with dihydroxyacetone-P role is filled by Lys-267. 309 to 311 (SGG) provides a ligand contact to substrate. N6,N6,N6-trimethyllysine is present on Lys-394.

This sequence belongs to the class I fructose-bisphosphate aldolase family. In terms of assembly, homotetramer. Post-translationally, can be trimethylated at Lys-394 by LSMT-L. The methylation level has no influence on the ologomerization state or on the kinetic properties of the enzyme. In terms of processing, phosphorylated on tyrosine residues in response to abscisic acid (ABA) in germinating seeds. As to expression, highly expressed in rosettes leaves.

Its subcellular location is the plastid. It is found in the chloroplast. The protein localises to the plastoglobule. It localises to the chloroplast stroma. It catalyses the reaction beta-D-fructose 1,6-bisphosphate = D-glyceraldehyde 3-phosphate + dihydroxyacetone phosphate. It functions in the pathway carbohydrate degradation; glycolysis; D-glyceraldehyde 3-phosphate and glycerone phosphate from D-glucose: step 4/4. Functionally, plays a key role in glycolysis and gluconeogenesis. This Arabidopsis thaliana (Mouse-ear cress) protein is Fructose-bisphosphate aldolase 2, chloroplastic.